Here is a 236-residue protein sequence, read N- to C-terminus: Rab-like protein 3 (236 aa).

The small GTPase-like stretch occupies residues 1–235 (MASLDRVKVL…GGGALKNFHC (235 aa)). Residues 16-21 (GVGKSS), 148-150 (KLD), and 179-180 (DC) each bind GTP.

This sequence belongs to the small GTPase superfamily. Rab family. As to quaternary structure, homodimer. Interacts with GPR89; the interaction stabilizes GPR89. Interacts with RAP1GDS1.

Functionally, required for KRAS signaling regulation and modulation of cell proliferation. Regulator of KRAS prenylation, and probably prenylation of other small GTPases. Required for lymphocyte development and function. Not required for myeloid cell development. The sequence is that of Rab-like protein 3 (Rabl3) from Mus musculus (Mouse).